Consider the following 201-residue polypeptide: Pro-P-factor (201 aa).

Residues 1–20 (MKITAVIALLFSLAAASPIP) form the signal peptide. Propeptides lie at residues 21 to 31 (VADPGVVSVSK), 58 to 65 (EFEAAPAK), 92 to 99 (EFEAAPEK), 126 to 133 (EFEAAPAK), and 160 to 201 (TEED…KFES). Residues asparagine 187 and asparagine 194 are each glycosylated (N-linked (GlcNAc...) asparagine).

Post-translationally, proteolytically cleaved by kpr, probably at the C-terminal side of dibasic Lys-Arg residues. In terms of processing, glycosylated. Most of the precursor molecules are glycosylated on at least one site, but only a small proportion are glycosylated on both sites.

The protein resides in the secreted. In h- cells under nutritional starvation, P-factor induces alteration of cell morphology toward mating, arrest of the cell cycle at the G1 phase prior to the initiation of DNA synthesis and indirect transcriptional activation of the sxa2 gene which down-regulates the signaling pathway. The sequence is that of Pro-P-factor (map2) from Schizosaccharomyces pombe (strain 972 / ATCC 24843) (Fission yeast).